We begin with the raw amino-acid sequence, 208 residues long: Probable transcriptional regulator ycf29 (208 aa).

The Response regulatory domain maps to lysine 11 to isoleucine 118. Aspartate 60 carries the 4-aspartylphosphate modification. In terms of domain architecture, HTH luxR-type spans threonine 146 to asparagine 208.

It is found in the plastid. It localises to the chloroplast. In Guillardia theta (Cryptophyte), this protein is Probable transcriptional regulator ycf29 (ycf29).